A 110-amino-acid chain; its full sequence is MLNYLWFFLAALFEIFGCYAFWLWLRQGKSALWVIPALVSLTVFALLLTRVEAAYAGRAYAAYGGIYIVASIAWLGLVERVRPLGTDWLGLAFCVIGATIILLGPRWSAA.

The next 4 membrane-spanning stretches (helical) occupy residues 5–25 (LWFF…WLWL), 28–48 (GKSA…ALLL), 59–79 (AYAA…GLVE), and 84–104 (LGTD…ILLG).

This sequence belongs to the UPF0060 family.

It localises to the cell inner membrane. The sequence is that of UPF0060 membrane protein Psyr_3752 from Pseudomonas syringae pv. syringae (strain B728a).